We begin with the raw amino-acid sequence, 92 residues long: Small ribosomal subunit protein uS19c (92 aa).

It belongs to the universal ribosomal protein uS19 family.

It localises to the plastid. The protein localises to the chloroplast. Protein S19 forms a complex with S13 that binds strongly to the 16S ribosomal RNA. The polypeptide is Small ribosomal subunit protein uS19c (Cycas taitungensis (Prince sago)).